The primary structure comprises 451 residues: MSAVALPRVSGGHDEHGHLEEFRTDPIGLMQRVRDECGDVGTFQLAGKQVVLLSGSHANEFFFRAGDDDLDQAKAYPFMTPIFGEGVVFDASPERRKEMLHNAALRGEQMKGHAATIEDQVRRMIADWGEAGEIDLLDFFAELTIYTSSACLIGKKFRDQLDGRFAKLYHELERGTDPLAYVDPYLPIESFRRRDEARNGLVALVADIMNGRIANPPTDKSDRDMLDVLIAVKAETGTPRFSADEITGMFISMMFAGHHTSSGTASWTLIELMRHRDAYAAVIDELDELYGDGRSVSFHALRQIPQLENVLKETLRLHPPLIILMRVAKGEFEVQGHRIHEGDLVAASPAISNRIPEDFPDPHDFVPARYEQPRQEDLLNRWTWIPFGAGRHRCVGAAFAIMQIKAIFSVLLREYEFEMAQPPESYRNDHSKMVVQLAQPACVRYRRRTGV.

The heme b site is built by Gln-72, Tyr-76, Lys-97, Arg-326, His-392, and Cys-394.

This sequence belongs to the cytochrome P450 family. Homodimer. Heme b is required as a cofactor.

It localises to the cytoplasm. It catalyses the reaction a 14alpha-methyl steroid + 6 reduced [2Fe-2S]-[ferredoxin] + 3 O2 + 5 H(+) = a Delta(14) steroid + formate + 6 oxidized [2Fe-2S]-[ferredoxin] + 4 H2O. Inhibited by alpha-ethyl-N-4-pyridinyl-benzeneacetamide (EPBA) and 4,4'-dihydroxybenzophenone (DHBP). Functionally, sterol 14alpha-demethylase whose physiological substrate is not known. Accepts electrons from the iron-sulfur ferredoxin Fdx encoded by an adjacent gene. In vitro, catalyzes C14-demethylation of lanosterol, 24,25-dihydrolanosterol and obtusifoliol, to produce the 8,14-dienes stereoselectively. The sequence is that of Sterol 14alpha-demethylase (cyp51) from Mycobacterium tuberculosis (strain ATCC 25618 / H37Rv).